The primary structure comprises 413 residues: Serine hydroxymethyltransferase (413 aa).

Residues leucine 119 and 123-125 (GHL) each bind (6S)-5,6,7,8-tetrahydrofolate. At lysine 228 the chain carries N6-(pyridoxal phosphate)lysine. Glutamate 243 contributes to the (6S)-5,6,7,8-tetrahydrofolate binding site.

This sequence belongs to the SHMT family. Homodimer. Pyridoxal 5'-phosphate serves as cofactor.

Its subcellular location is the cytoplasm. The catalysed reaction is (6R)-5,10-methylene-5,6,7,8-tetrahydrofolate + glycine + H2O = (6S)-5,6,7,8-tetrahydrofolate + L-serine. It participates in one-carbon metabolism; tetrahydrofolate interconversion. Its pathway is amino-acid biosynthesis; glycine biosynthesis; glycine from L-serine: step 1/1. Catalyzes the reversible interconversion of serine and glycine with tetrahydrofolate (THF) serving as the one-carbon carrier. This reaction serves as the major source of one-carbon groups required for the biosynthesis of purines, thymidylate, methionine, and other important biomolecules. Also exhibits THF-independent aldolase activity toward beta-hydroxyamino acids, producing glycine and aldehydes, via a retro-aldol mechanism. In Thermoanaerobacter pseudethanolicus (strain ATCC 33223 / 39E) (Clostridium thermohydrosulfuricum), this protein is Serine hydroxymethyltransferase.